A 164-amino-acid chain; its full sequence is MHCPFCRHEDSRVVDSRSLDDGSAIRRRRQCQACGKRFTTMETTALTVVKRSGVAEPFDRSKVINGVRKACQGRPVTSDDLAMLAQEVEETVRATGNAEVDAHDVGLAILDPLRRLDQVAFLRFASVYRDFESLDDFEEAIAELRAGDGDDRGRPAVQPRLFTR.

A zinc finger lies at cysteine 3 to cysteine 34. Residues leucine 46 to aspartate 136 enclose the ATP-cone domain.

This sequence belongs to the NrdR family. It depends on Zn(2+) as a cofactor.

Functionally, negatively regulates transcription of bacterial ribonucleotide reductase nrd genes and operons by binding to NrdR-boxes. In Micrococcus luteus (strain ATCC 4698 / DSM 20030 / JCM 1464 / CCM 169 / CCUG 5858 / IAM 1056 / NBRC 3333 / NCIMB 9278 / NCTC 2665 / VKM Ac-2230) (Micrococcus lysodeikticus), this protein is Transcriptional repressor NrdR.